The sequence spans 472 residues: Protein translocase subunit SecD (472 aa).

Helical transmembrane passes span 8–28 (ILFTVIVFVFALLGLILPLSG), 300–320 (TIINAGIIGLIIVMIYMIIFY), 325–347 (VIADIALIYNTFLLMGILSWTGA), 353–375 (GIAGIILTFGTTVDGNIIIYERI), 396–416 (VFSTIFDANITTILAGLVLFF), and 424–444 (GFAVTLIIGVLGAMFTNLVVS).

It belongs to the SecD/SecF family. SecD subfamily. Forms a complex with SecF. Part of the essential Sec protein translocation apparatus which comprises SecA, SecYEG and auxiliary proteins SecDF. Other proteins may also be involved.

Its subcellular location is the cell inner membrane. Functionally, part of the Sec protein translocase complex. Interacts with the SecYEG preprotein conducting channel. SecDF uses the proton motive force (PMF) to complete protein translocation after the ATP-dependent function of SecA. The polypeptide is Protein translocase subunit SecD (Petrotoga mobilis (strain DSM 10674 / SJ95)).